The chain runs to 258 residues: Regulatory protein RecX (258 aa).

The protein belongs to the RecX family.

The protein resides in the cytoplasm. Functionally, modulates RecA activity. In Streptococcus uberis (strain ATCC BAA-854 / 0140J), this protein is Regulatory protein RecX.